Consider the following 360-residue polypeptide: Phospho-N-acetylmuramoyl-pentapeptide-transferase (360 aa).

10 helical membrane passes run glycine 27 to leucine 47, threonine 71 to alanine 91, leucine 93 to phenylalanine 113, phenylalanine 128 to isoleucine 148, phenylalanine 168 to glycine 188, glycine 199 to serine 219, leucine 239 to proline 259, alanine 262 to valine 282, isoleucine 288 to valine 308, and glutamine 337 to leucine 357.

The protein belongs to the glycosyltransferase 4 family. MraY subfamily. The cofactor is Mg(2+).

The protein resides in the cell inner membrane. The catalysed reaction is UDP-N-acetyl-alpha-D-muramoyl-L-alanyl-gamma-D-glutamyl-meso-2,6-diaminopimeloyl-D-alanyl-D-alanine + di-trans,octa-cis-undecaprenyl phosphate = di-trans,octa-cis-undecaprenyl diphospho-N-acetyl-alpha-D-muramoyl-L-alanyl-D-glutamyl-meso-2,6-diaminopimeloyl-D-alanyl-D-alanine + UMP. It functions in the pathway cell wall biogenesis; peptidoglycan biosynthesis. In terms of biological role, catalyzes the initial step of the lipid cycle reactions in the biosynthesis of the cell wall peptidoglycan: transfers peptidoglycan precursor phospho-MurNAc-pentapeptide from UDP-MurNAc-pentapeptide onto the lipid carrier undecaprenyl phosphate, yielding undecaprenyl-pyrophosphoryl-MurNAc-pentapeptide, known as lipid I. The polypeptide is Phospho-N-acetylmuramoyl-pentapeptide-transferase (Brucella anthropi (strain ATCC 49188 / DSM 6882 / CCUG 24695 / JCM 21032 / LMG 3331 / NBRC 15819 / NCTC 12168 / Alc 37) (Ochrobactrum anthropi)).